A 55-amino-acid polypeptide reads, in one-letter code: UPF0391 membrane protein Sfum_0248 (55 aa).

The next 2 helical transmembrane spans lie at W4 to I24 and A28 to S48.

Belongs to the UPF0391 family.

It is found in the cell membrane. The sequence is that of UPF0391 membrane protein Sfum_0248 from Syntrophobacter fumaroxidans (strain DSM 10017 / MPOB).